We begin with the raw amino-acid sequence, 396 residues long: Tyrosine--tRNA ligase (396 aa).

The 'HIGH' region motif lies at P43–H52. The short motif at K227–S231 is the 'KMSKS' region element. K230 serves as a coordination point for ATP. The S4 RNA-binding domain occupies T338–I396.

Belongs to the class-I aminoacyl-tRNA synthetase family. TyrS type 2 subfamily. As to quaternary structure, homodimer.

It localises to the cytoplasm. The catalysed reaction is tRNA(Tyr) + L-tyrosine + ATP = L-tyrosyl-tRNA(Tyr) + AMP + diphosphate + H(+). Functionally, catalyzes the attachment of tyrosine to tRNA(Tyr) in a two-step reaction: tyrosine is first activated by ATP to form Tyr-AMP and then transferred to the acceptor end of tRNA(Tyr). The protein is Tyrosine--tRNA ligase of Dehalococcoides mccartyi (strain CBDB1).